We begin with the raw amino-acid sequence, 1272 residues long: Myosin-3 (1272 aa).

A disordered region spans residues 1 to 20 (MAVIKKGARRKDVKEPKKRS). The Myosin motor domain occupies 36 to 715 (VGISDLTLLS…SLFALEDMRD (680 aa)). Residue 129–136 (GESGAGKT) participates in ATP binding. Phosphoserine is present on Ser357. The segment at 588-610 (ANELVETLSKAEPSYIRTIKPNQ) is actin-binding. IQ domains follow at residues 719–739 (YNMAARIQRAWRRFLQRRIDA) and 740–765 (AIKIQRTIREKKGGNKYVKLRDYGTK). One can recognise a TH1 domain in the interval 771-961 (KERRSMSLLG…TIYVRRGHPA (191 aa)). 3 disordered regions span residues 951–1015 (STIY…QKPV), 1029–1141 (YNPK…SELP), and 1217–1272 (VQFG…DDDW). Basic residues predominate over residues 980–1000 (IKSKKSKHKSTHKHTHSHRSH). Low complexity predominate over residues 1066-1078 (KKASSSHKSSSAK). The span at 1089-1098 (GVEKNKEPLK) shows a compositional bias: basic and acidic residues. Residues 1109–1118 (PIPPPPPPMG) show a composition bias toward pro residues. The SH3 domain maps to 1120 to 1182 (PKDPKFEAAY…PTAYMTPYKD (63 aa)). Positions 1217-1236 (VQFGSATVGPTSDNQSNPVG) are enriched in polar residues. Acidic residues predominate over residues 1258–1272 (ADDDDNDDGDDDDDW).

This sequence belongs to the TRAFAC class myosin-kinesin ATPase superfamily. Myosin family. Interacts (via myosin motor domain) with SHE4; this interaction is important for proper localization and may regulate the interaction of the motor domain with actin. Interacts (via SH3 domain) with VRP1; this interaction is required for localization to sites of polarized growth and may regulate the interaction of the tail domain with actin. Interacts (via SH3 domain) with PAN1; this interaction is important for late stages of endocytopsis. Interacts (via SH3 domain) with BBC1 and LAS17. Interacts (via C-terminal acidic tail) with ARC19 and ARC40; ARC19 and ARC40 are Arp2/3 complex subunits. In terms of processing, phosphorylation of the TEDS site (Ser-357) is required for the polarization of the actin cytoskeleton and for ligand-induced, but not for constitutive internalization of STE2. Phosphorylation probably activates the myosin-I ATPase. Ser-357 is phosphorylated by CLA4 and STE20 in vitro.

It localises to the cytoplasm. The protein localises to the cytoskeleton. Its subcellular location is the actin patch. Its function is as follows. One of two redundant type-I myosins implicated in the organization of the actin cytoskeleton. Required for proper actin cytoskeleton polarization and for the internalization step in endocytosis. At the cell cortex, assembles in patch-like structures together with proteins from the actin-polymerizing machinery and promotes actin assembly. Functions redundantly with LAS17 as actin nucleation-promoting factor (NPF) for the Arp2/3 complex. Motor domain phosphorylation by PAK kinases CLA4 and STE20 promotes CDC42-regulated actin assembly. Functions together with the NPF PAN1 in late stages of endocytosis. Motor domain phosphorylation by PDK1 kinases PKH1 and PKH2, and by SGK kinases YPK1 and YPK2, promotes ligand-induced, but not constitutive endocytosis of the G protein-coupled receptor STE2. The chain is Myosin-3 (MYO3) from Saccharomyces cerevisiae (strain ATCC 204508 / S288c) (Baker's yeast).